We begin with the raw amino-acid sequence, 117 residues long: Cysteine rich necrotrophic effector Tox1 (117 aa).

The first 17 residues, 1–17 (MKLTMVLSVAFATLTFA), serve as a signal peptide directing secretion. 8 cysteine pairs are disulfide-bonded: Cys-36–Cys-87, Cys-44–Cys-55, Cys-53–Cys-58, Cys-54–Cys-98, Cys-63–Cys-83, Cys-67–Cys-117, Cys-86–Cys-97, and Cys-107–Cys-110. The interval 87-117 (CNAGGESHELCCSIASAGIDCNPCTAGLRMC) is chitin-binding domain.

Interacts with host cell wall-associated kinase receptor Snn1.

The protein localises to the secreted. Functionally, necrotrophic effector that plays a critical role during fungal penetration, via its interaction with the host Snn1 protein. Snn1 is a member of the wall-associated kinase class of receptors, which are known to drive pathways for biotrophic pathogen resistance. Recognition of Tox1 by Snn1 induces mitogen-activated protein kinase genes such as MAPK3 and activates programmed cell death, which allows this necrotroph to gain nutrients and sporulate. Recognition of Tox1 by Snn1 also induces other plant defense responses, including oxidative burst and pathogenesis related (PR) gene expression. The development of necrosis and disease induced by Tox1, and particularly penetration during infection, requires light, which is probably related to the light-dependent expression of host Snn1. Tox1 plays an additional role in providing significant protection from wheat chitinases by binding chitin in the fungal cell wall. The polypeptide is Cysteine rich necrotrophic effector Tox1 (Phaeosphaeria nodorum (strain SN15 / ATCC MYA-4574 / FGSC 10173) (Glume blotch fungus)).